A 491-amino-acid polypeptide reads, in one-letter code: UDP-N-acetylmuramate--L-alanine ligase (491 aa).

126-132 (GTHGKTT) is an ATP binding site.

Belongs to the MurCDEF family.

The protein localises to the cytoplasm. The catalysed reaction is UDP-N-acetyl-alpha-D-muramate + L-alanine + ATP = UDP-N-acetyl-alpha-D-muramoyl-L-alanine + ADP + phosphate + H(+). It functions in the pathway cell wall biogenesis; peptidoglycan biosynthesis. In terms of biological role, cell wall formation. The chain is UDP-N-acetylmuramate--L-alanine ligase from Escherichia coli O7:K1 (strain IAI39 / ExPEC).